The sequence spans 787 residues: Transcription factor SOX-6 (787 aa).

Positions 1-46 are disordered; the sequence is MSSKQATSPFACAADGEDAMTQDLTSREKEEGSDQHVASHLPLHPI. Basic and acidic residues predominate over residues 25–34; sequence TSREKEEGSD. T119 carries the post-translational modification Phosphothreonine. The stretch at 184-262 forms a coiled coil; the sequence is LAEKERQLST…LLQQQIQVQG (79 aa). Positions 340–429 are disordered; the sequence is PGAKMPSTPQ…KSSIPSPIGG (90 aa). The segment covering 352–361 has biased composition (polar residues); that stretch reads NTAGTVSPTG. S358 bears the Phosphoserine mark. At T360 the chain carries Phosphothreonine. Residues K363 and K376 each participate in a glycyl lysine isopeptide (Lys-Gly) (interchain with G-Cter in SUMO) cross-link. Phosphoserine is present on residues S398 and S401. Polar residues predominate over residues 398–420; the sequence is SPTSPTQNLFPASKTSPVNLPNK. Positions 580–648 form a DNA-binding region, HMG box; the sequence is IKRPMNAFMV…IHLEKYPNYK (69 aa). The span at 712-740 shows a compositional bias: polar residues; the sequence is TPSPQMTSDCSSTSASPEPSLPVIQSTYG. The interval 712–787 is disordered; the sequence is TPSPQMTSDC…NEAPEAVSAN (76 aa). Acidic residues predominate over residues 755-768; that stretch reads NGEDEMEMYDDYED.

In terms of assembly, homodimer. Interacts with DAZAP2. May interact with CENPK. Sumoylation inhibits the transcriptional activity.

Its subcellular location is the nucleus. The protein resides in the cytoplasm. In terms of biological role, transcription factor that plays a key role in several developmental processes, including neurogenesis, chondrocytes differentiation and cartilage formation. Specifically binds the 5'-AACAAT-3' DNA motif present in enhancers and super-enhancers and promotes expression of genes important for chondrogenesis. Required for overt chondrogenesis when condensed prechondrocytes differentiate into early stage chondrocytes: SOX5 and SOX6 cooperatively bind with SOX9 on active enhancers and super-enhancers associated with cartilage-specific genes, and thereby potentiate SOX9's ability to transactivate. Not involved in precartilaginous condensation, the first step in chondrogenesis, during which skeletal progenitors differentiate into prechondrocytes. Together with SOX5, required to form and maintain a pool of highly proliferating chondroblasts between epiphyses and metaphyses, to form columnar chondroblasts, delay chondrocyte prehypertrophy but promote hypertrophy, and to delay terminal differentiation of chondrocytes on contact with ossification fronts. Binds to the proximal promoter region of the myelin protein MPZ gene, and is thereby involved in the differentiation of oligodendroglia in the developing spinal tube. Binds to the gene promoter of MBP and acts as a transcriptional repressor. The chain is Transcription factor SOX-6 from Pongo abelii (Sumatran orangutan).